The sequence spans 373 residues: MSKRCYYEVLEVSREAQEGEIKRAYRKKAMEFHPDRNPGNAEAEEKFKEAAEAYDVLRDPEKRSRYDRFGHQGMNGMNGGFGGFQSSEDIFGAFGDIFGDIFGFGGGGRGANRMQAGSDLRYNLTVSFRDAAKGTEVELNIPVTDTCDTCEGSGSAPGTSPETCSHCGGRGAVEQNQGFFRISVPCPACNGRGKVITDPCSECRGAGYVRKQKDLNVRIPAGVDNGSRLRLRGEGEAGMNGGPHGDLYVVITVEPDKVFKRQGQDLVLSTEITFVQAALGYKLEVPTLDEPIEMDIPKGTQSGEVFQLRGLGLPYLGSSHKGDLLVEVKVKTPTGLNSRQEELLREFEALDEEKPMKKVKKLFKKAKDKVMGE.

The J domain maps to 5–70 (CYYEVLEVSR…EKRSRYDRFG (66 aa)). A CR-type zinc finger spans residues 134 to 212 (GTEVELNIPV…CRGAGYVRKQ (79 aa)). C147, C150, C164, C167, C186, C189, C200, and C203 together coordinate Zn(2+). CXXCXGXG motif repeat units follow at residues 147–154 (CDTCEGSG), 164–171 (CSHCGGRG), 186–193 (CPACNGRG), and 200–207 (CSECRGAG).

It belongs to the DnaJ family. In terms of assembly, homodimer. Zn(2+) serves as cofactor.

It localises to the cytoplasm. Participates actively in the response to hyperosmotic and heat shock by preventing the aggregation of stress-denatured proteins and by disaggregating proteins, also in an autonomous, DnaK-independent fashion. Unfolded proteins bind initially to DnaJ; upon interaction with the DnaJ-bound protein, DnaK hydrolyzes its bound ATP, resulting in the formation of a stable complex. GrpE releases ADP from DnaK; ATP binding to DnaK triggers the release of the substrate protein, thus completing the reaction cycle. Several rounds of ATP-dependent interactions between DnaJ, DnaK and GrpE are required for fully efficient folding. Also involved, together with DnaK and GrpE, in the DNA replication of plasmids through activation of initiation proteins. This chain is Chaperone protein DnaJ, found in Maridesulfovibrio salexigens (strain ATCC 14822 / DSM 2638 / NCIMB 8403 / VKM B-1763) (Desulfovibrio salexigens).